The primary structure comprises 182 residues: uncharacterized protein (182 aa).

Positions 1–170 constitute a Macro domain; it reads MIVKIIKGDI…IFVNIFEREL (170 aa).

This is an uncharacterized protein from Sulfurisphaera tokodaii (strain DSM 16993 / JCM 10545 / NBRC 100140 / 7) (Sulfolobus tokodaii).